The chain runs to 150 residues: Globin-3 (150 aa).

A Globin domain is found at 11–150 (PLTAADKTKI…IICILLNSAY (140 aa)). The heme b site is built by H74 and H106.

The protein belongs to the globin family. As to quaternary structure, monomer.

This chain is Globin-3, found in Mordacia mordax (Southern hemisphere lamprey).